Reading from the N-terminus, the 485-residue chain is E3 ubiquitin-protein ligase TRIM58 (485 aa).

An RING-type zinc finger spans residues 15–59 (CSVCLDFLQEPISVDCGHSFCLRCISEFCEKSDSAQGVYACPQCR). The B box-type zinc-finger motif lies at 90 to 131 (AGSRQCARHGEDLSHFCEEDQTMLCWVCDTSPEHRSHRTETL). C95, H98, C117, and H123 together coordinate Zn(2+). The stretch at 192 to 241 (LAQEEQLQLRRLEEEERATLQRLRDSRNRLAQQNKALKELAEELEERSQR) forms a coiled coil. One can recognise a B30.2/SPRY domain in the interval 271–466 (DLKTVCRIPG…LPPMTEAAPG (196 aa)).

This sequence belongs to the TRIM/RBCC family. Expressed in erythroblasts.

It catalyses the reaction S-ubiquitinyl-[E2 ubiquitin-conjugating enzyme]-L-cysteine + [acceptor protein]-L-lysine = [E2 ubiquitin-conjugating enzyme]-L-cysteine + N(6)-ubiquitinyl-[acceptor protein]-L-lysine.. Its pathway is protein modification; protein ubiquitination. In terms of biological role, E3 ubiquitin ligase induced during late erythropoiesis. Directly binds and ubiquitinates the intermediate chain of the microtubule motor dynein (DYNC1LI1/DYNC1LI2), stimulating the degradation of the dynein holoprotein complex. May participate in the erythroblast enucleation process through regulation of nuclear polarization. In Mus musculus (Mouse), this protein is E3 ubiquitin-protein ligase TRIM58 (Trim58).